We begin with the raw amino-acid sequence, 649 residues long: MGSNTSPGQADPLESENESSLTSRFLPNKRDGGKDNESVIPEKEEPDLNEPVLAVPLPKSRYALTKRSSSSEYPRRSASTSAKKNVIPITRSYSTTFFSKTNDQPTVTGNQDKPISRLRASKLQIQNFWNYICFELLANDTVPANPIKEKHVENFLATPYAIEKTFLFGWFVSVDSFLYIFTLFPIRVLISFFTLSRCIFQGLFSTFFHRNSSPNRSLPRSRKIDLLKLLLIFSTSILIRKIDVSRLYHIIRAQASIRFYVLYNVLEIADRLCCALGQDVLDCLFSNHILSFNFWNPAGWMTFFYYFAISLAYMVLHTLVLLYQIITLNVTVNSYSNAVLALLMSNQLVEIKGAVFKKFEKENLFQLTCSDVVERFQITIMVIIIFLRNLAELYTTSSLDQPLLTFKRLKTLLAPFFWVIGSELFVDWLKHAFIIKFNYIKPSIYSRFTDVLCHDYVASGAQLTQTVTGCSQQVARRMGLPVLPLVCVFIRTSMQTWSMFRSTHSMKQEIAKSIGTIFPTKDNYVYYLPNKEANTYNAGKEASWETLLLSVVRGKSGIAFLFFMAIMLKLLLGKAILAITQSRYESMQQREEKINSWERERKANNFFRGHIEIDKKTKDFLNNSKDDLPVPKSPLLTLERYAMHSKRIW.

The disordered stretch occupies residues Met-1–Val-55. At Met-1–Thr-165 the chain is on the cytoplasmic side. The segment covering Asn-28 to Lys-43 has biased composition (basic and acidic residues). Phosphoserine is present on Ser-94. A helical transmembrane segment spans residues Phe-166–Ile-186. The Lumenal portion of the chain corresponds to Arg-187–Thr-302. Asn-215 carries N-linked (GlcNAc...) asparagine glycosylation. Residues Phe-303–Tyr-323 traverse the membrane as a helical segment. Topologically, residues Gln-324 to Gln-366 are cytoplasmic. A helical transmembrane segment spans residues Leu-367–Leu-387. Topologically, residues Arg-388–Ala-414 are lumenal. Residues Pro-415 to Ile-435 form a helical membrane-spanning segment. Over Lys-436–Gly-479 the chain is Cytoplasmic. Residues Leu-480–Phe-500 form a helical membrane-spanning segment. At Arg-501 to Gly-557 the chain is on the lumenal side. A helical transmembrane segment spans residues Ile-558–Ala-578. The Cytoplasmic portion of the chain corresponds to Ile-579–Trp-649.

Belongs to the TAPT1 family. Interacts with slp1.

Its subcellular location is the endoplasmic reticulum membrane. Functionally, may be involved in membrane protein folding. The polypeptide is Endoplasmic reticulum membrane protein 65 (Schizosaccharomyces pombe (strain 972 / ATCC 24843) (Fission yeast)).